We begin with the raw amino-acid sequence, 490 residues long: Zinc finger protein STP4 (490 aa).

Composition is skewed to low complexity over residues methionine 1 to serine 16 and proline 52 to asparagine 73. Residues methionine 1–serine 85 are disordered. 2 positions are modified to phosphoserine: serine 153 and serine 155. Over residues glutamine 231–serine 247 the composition is skewed to low complexity. The disordered stretch occupies residues glutamine 231–glutamine 273. The segment covering serine 250–lysine 265 has biased composition (polar residues). A C2H2-type zinc finger spans residues histidine 304–histidine 326. The tract at residues glutamate 338–glutamate 375 is disordered.

It localises to the cytoplasm. Its subcellular location is the mitochondrion. The protein localises to the nucleus. This chain is Zinc finger protein STP4 (STP4), found in Saccharomyces cerevisiae (strain ATCC 204508 / S288c) (Baker's yeast).